The primary structure comprises 102 residues: Large ribosomal subunit protein bL21 (102 aa).

The protein belongs to the bacterial ribosomal protein bL21 family. As to quaternary structure, part of the 50S ribosomal subunit. Contacts protein L20.

Its function is as follows. This protein binds to 23S rRNA in the presence of protein L20. The chain is Large ribosomal subunit protein bL21 from Sorangium cellulosum (strain So ce56) (Polyangium cellulosum (strain So ce56)).